The chain runs to 185 residues: Ribosome-recycling factor (185 aa).

The protein belongs to the RRF family.

Its subcellular location is the cytoplasm. In terms of biological role, responsible for the release of ribosomes from messenger RNA at the termination of protein biosynthesis. May increase the efficiency of translation by recycling ribosomes from one round of translation to another. This chain is Ribosome-recycling factor, found in Bacillus cereus (strain G9842).